Consider the following 180-residue polypeptide: MSNGIVAKRYAVALFKIAKEKHVLEMFEEELRLVQNVFTKNGELHSFLTQPNISKEQKKTFLANVFASVSESILNTLYILIDNKRIDILPEIANEYVVLANEERNVADATVYSIRLLSEEEKLNIAEAFAKKTGKDAIRVKNVVDEDLLGGIKVRIGNRIYDGSLQGKLARIQRELMKNR.

Belongs to the ATPase delta chain family. As to quaternary structure, F-type ATPases have 2 components, F(1) - the catalytic core - and F(0) - the membrane proton channel. F(1) has five subunits: alpha(3), beta(3), gamma(1), delta(1), epsilon(1). F(0) has three main subunits: a(1), b(2) and c(10-14). The alpha and beta chains form an alternating ring which encloses part of the gamma chain. F(1) is attached to F(0) by a central stalk formed by the gamma and epsilon chains, while a peripheral stalk is formed by the delta and b chains.

It localises to the cell membrane. In terms of biological role, f(1)F(0) ATP synthase produces ATP from ADP in the presence of a proton or sodium gradient. F-type ATPases consist of two structural domains, F(1) containing the extramembraneous catalytic core and F(0) containing the membrane proton channel, linked together by a central stalk and a peripheral stalk. During catalysis, ATP synthesis in the catalytic domain of F(1) is coupled via a rotary mechanism of the central stalk subunits to proton translocation. This protein is part of the stalk that links CF(0) to CF(1). It either transmits conformational changes from CF(0) to CF(1) or is implicated in proton conduction. The sequence is that of ATP synthase subunit delta from Bacillus mycoides (strain KBAB4) (Bacillus weihenstephanensis).